Consider the following 168-residue polypeptide: Photosystem I assembly protein Ycf3 (168 aa).

TPR repeat units lie at residues 35–68 (AFTY…EIDP), 72–105 (SYIL…NPFL), and 120–153 (GEQA…TPGN).

Belongs to the Ycf3 family.

It localises to the plastid membrane. Essential for the assembly of the photosystem I (PSI) complex. May act as a chaperone-like factor to guide the assembly of the PSI subunits. The chain is Photosystem I assembly protein Ycf3 from Cuscuta reflexa (Southern Asian dodder).